Consider the following 155-residue polypeptide: Ribosomal RNA large subunit methyltransferase H (155 aa).

Residues L72, G104, and 123–128 (LAKITL) each bind S-adenosyl-L-methionine.

It belongs to the RNA methyltransferase RlmH family. In terms of assembly, homodimer.

It localises to the cytoplasm. The catalysed reaction is pseudouridine(1915) in 23S rRNA + S-adenosyl-L-methionine = N(3)-methylpseudouridine(1915) in 23S rRNA + S-adenosyl-L-homocysteine + H(+). Its function is as follows. Specifically methylates the pseudouridine at position 1915 (m3Psi1915) in 23S rRNA. In Mycoplasma capricolum subsp. capricolum (strain California kid / ATCC 27343 / NCTC 10154), this protein is Ribosomal RNA large subunit methyltransferase H.